The following is a 129-amino-acid chain: MSTKVVEIKTLKVGKYIVLGGEASKITSLTTSSPGKHGAAKARLEAVGIFDNQKRSIVKPVDTKVDIPIIDKRVGQVLSIQGNNVQLMDMENYDTLDLPMPEELKDQITEGIEVDYIVALGNMKIMRTK.

K36 bears the Hypusine mark.

It belongs to the eIF-5A family.

Its subcellular location is the cytoplasm. Functionally, functions by promoting the formation of the first peptide bond. This chain is Translation initiation factor 5A (eIF5A), found in Methanobrevibacter smithii (strain ATCC 35061 / DSM 861 / OCM 144 / PS).